The sequence spans 348 residues: Zinc finger and SCAN domain-containing protein 16 (348 aa).

An SCAN box domain is found at 41 to 123 (RQHFRKLCYQ…TVLEDLEREL (83 aa)). Disordered stretches follow at residues 160–184 (PKKTQLEQEAGKPQRNGDKTRTKNE) and 205–226 (RLNKDTPQHPKSKDIIENEGRS). Residues 163–184 (TQLEQEAGKPQRNGDKTRTKNE) are compositionally biased toward basic and acidic residues. 4 C2H2-type zinc fingers span residues 236–258 (YKCDECGKSFSHSSDLSKHRRTH), 264–286 (YKCDECGKAFIQRSHLIGHHRVH), 292–314 (YKCKECGKDFSGRTGLIQHQRIH), and 320–342 (YECDECGRPFRVSSALIRHQRIH).

Belongs to the krueppel C2H2-type zinc-finger protein family.

The protein localises to the nucleus. Its function is as follows. May be involved in transcriptional regulation. The protein is Zinc finger and SCAN domain-containing protein 16 (ZSCAN16) of Homo sapiens (Human).